The primary structure comprises 248 residues: NADP-dependent 3-hydroxy acid dehydrogenase YdfG (248 aa).

NADP(+) is bound by residues glycine 7 to phenylalanine 12, arginine 32 to arginine 33, aspartate 54 to valine 55, and asparagine 81. Residue serine 134 coordinates substrate. NADP(+) contacts are provided by residues tyrosine 147, lysine 151, and proline 177–phenylalanine 185. Residue tyrosine 147 is the Proton acceptor of the active site.

It belongs to the short-chain dehydrogenases/reductases (SDR) family. As to quaternary structure, homotetramer.

It carries out the reaction 3-hydroxypropanoate + NADP(+) = 3-oxopropanoate + NADPH + H(+). It catalyses the reaction L-allo-threonine + NADP(+) = aminoacetone + CO2 + NADPH. Functionally, NADP-dependent dehydrogenase with broad substrate specificity acting on 3-hydroxy acids. Catalyzes the NADP-dependent oxidation of L-allo-threonine to L-2-amino-3-keto-butyrate, which is spontaneously decarboxylated into aminoacetone. Also acts on D-threonine, L-serine, D-serine, D-3-hydroxyisobutyrate, L-3-hydroxyisobutyrate, D-glycerate and L-glycerate. Able to catalyze the reduction of the malonic semialdehyde to 3-hydroxypropionic acid. YdfG is apparently supplementing RutE, the presumed malonic semialdehyde reductase involved in pyrimidine degradation since both are able to detoxify malonic semialdehyde. The polypeptide is NADP-dependent 3-hydroxy acid dehydrogenase YdfG (Escherichia coli O157:H7).